The sequence spans 712 residues: Cyclolysin secretion/processing ATP-binding protein CyaB (712 aa).

In terms of domain architecture, Peptidase C39 spans Gln7–Cys128. An ABC transmembrane type-1 domain is found at Ile157 to Gln439. Transmembrane regions (helical) follow at residues Val160–Val180, Leu194–Ile214, Ala272–Tyr292, Leu298–Leu318, Val367–Ile387, and Leu390–Val410. The ABC transporter domain occupies Ile471–Leu706. Gly505–Ser512 contacts ATP.

This sequence belongs to the ABC transporter superfamily. Cyclolysin exporter (TC 3.A.1.109.2) family.

It localises to the cell membrane. In terms of biological role, involved in the export of calmodulin-sensitive adenylate cyclase-hemolysin (cyclolysin). The sequence is that of Cyclolysin secretion/processing ATP-binding protein CyaB (cyaB) from Bordetella pertussis (strain ATCC 9797 / DSM 5571 / CCUG 30873 / LMG 14455 / NCTC 10739 / 18323).